Reading from the N-terminus, the 132-residue chain is Small ribosomal subunit protein uS8 (132 aa).

It belongs to the universal ribosomal protein uS8 family. In terms of assembly, part of the 30S ribosomal subunit. Contacts proteins S5 and S12.

Its function is as follows. One of the primary rRNA binding proteins, it binds directly to 16S rRNA central domain where it helps coordinate assembly of the platform of the 30S subunit. The sequence is that of Small ribosomal subunit protein uS8 from Bacillus subtilis (strain 168).